Reading from the N-terminus, the 230-residue chain is MRVEINADDYGLTKGVTDGIIKAHRGGCVTSTTLMMNGLSVEYAVEQAKSNPALKVGIHLVLTWGRPISNDVASLVQSNGKFRYTSSYREMDPPSLADVEKEWRAQIEEFKKTGLTLNHIDSHHHIHAWSPLTDVIIKLAKEFEVPVRYADTLKDYPEICWTEKIWVQFYQDGVNDNLFEQLKEEKVRSLEIMTHPGFVDEDLKENSSYLFTREKEVDVLCSIQIPEWVE.

Mg(2+) is bound by residues His59 and His123.

The protein belongs to the YdjC deacetylase family. As to quaternary structure, homodimer. It depends on Mg(2+) as a cofactor.

Probably catalyzes the deacetylation of acetylated carbohydrates an important step in the degradation of oligosaccharides. The chain is Carbohydrate deacetylase from Oceanobacillus iheyensis (strain DSM 14371 / CIP 107618 / JCM 11309 / KCTC 3954 / HTE831).